The sequence spans 336 residues: tRNA N6-adenosine threonylcarbamoyltransferase (336 aa).

3 residues coordinate Fe cation: histidine 115, histidine 119, and tyrosine 136. Residues 136–140 (YVAGG), aspartate 168, glutamate 185, and serine 266 contribute to the substrate site. Aspartate 294 lines the Fe cation pocket.

The protein belongs to the KAE1 / TsaD family. It depends on Fe(2+) as a cofactor.

The protein localises to the cytoplasm. The enzyme catalyses L-threonylcarbamoyladenylate + adenosine(37) in tRNA = N(6)-L-threonylcarbamoyladenosine(37) in tRNA + AMP + H(+). Required for the formation of a threonylcarbamoyl group on adenosine at position 37 (t(6)A37) in tRNAs that read codons beginning with adenine. Is probably involved in the transfer of the threonylcarbamoyl moiety of threonylcarbamoyl-AMP (TC-AMP) to the N6 group of A37. In Thermofilum pendens (strain DSM 2475 / Hrk 5), this protein is tRNA N6-adenosine threonylcarbamoyltransferase.